The sequence spans 505 residues: Prenylcysteine oxidase 1 (505 aa).

The N-terminal stretch at 1–27 is a signal peptide; the sequence is MGRVVAELVSSLLGLWLLLCSCGCPEG. N-linked (GlcNAc...) asparagine glycosylation is found at asparagine 196, asparagine 323, and asparagine 353.

Belongs to the prenylcysteine oxidase family. Requires FAD as cofactor.

Its subcellular location is the lysosome. It catalyses the reaction an S-polyprenyl-L-cysteine + O2 + H2O = a polyprenal + L-cysteine + H2O2. The enzyme catalyses S-(2E,6E)-farnesyl-L-cysteine + O2 + H2O = (2E,6E)-farnesal + L-cysteine + H2O2. The catalysed reaction is [(2E,6E,10E)-geranylgeranyl]-L-cysteine + O2 + H2O = (2E,6E,10E)-geranylgeranial + L-cysteine + H2O2. Its function is as follows. Prenylcysteine oxidase that cleaves the thioether bond of prenyl-L-cysteines, such as farnesylcysteine and geranylgeranylcysteine. Only active against free prenylcysteines and not prenylcysteine residues within prenylated proteins or peptides. Involved in the final step in the degradation of prenylated proteins, by degrading prenylcysteines after the protein has been degraded. The sequence is that of Prenylcysteine oxidase 1 from Pongo abelii (Sumatran orangutan).